Consider the following 427-residue polypeptide: Peptidase B (427 aa).

Positions 195 and 200 each coordinate Mn(2+). The active site involves K207. Mn(2+) is bound by residues D218, D277, and E279. R281 is an active-site residue.

The protein belongs to the peptidase M17 family. In terms of assembly, homohexamer. Mn(2+) is required as a cofactor.

The protein resides in the cytoplasm. The catalysed reaction is Release of an N-terminal amino acid, Xaa, from a peptide or arylamide. Xaa is preferably Glu or Asp but may be other amino acids, including Leu, Met, His, Cys and Gln.. Its function is as follows. Probably plays an important role in intracellular peptide degradation. The sequence is that of Peptidase B from Salmonella arizonae (strain ATCC BAA-731 / CDC346-86 / RSK2980).